The chain runs to 255 residues: uncharacterized protein (255 aa).

This is an uncharacterized protein from Bacillus subtilis (strain 168).